Consider the following 71-residue polypeptide: Protein Tlp homolog (71 aa).

The disordered stretch occupies residues 30–56 (ETLQNNSLSRDQRQAIMEKNKRREESI). A compositionally biased stretch (basic and acidic residues) spans 39 to 56 (RDQRQAIMEKNKRREESI).

This sequence belongs to the Tlp family.

This is Protein Tlp homolog from Desulforamulus reducens (strain ATCC BAA-1160 / DSM 100696 / MI-1) (Desulfotomaculum reducens).